The sequence spans 998 residues: Collagen alpha-1(I) chain (998 aa).

Residues 1-998 (GGVSVPGPMG…PGPPGPPGPP (998 aa)) are disordered. 4-hydroxyproline occurs at positions 18, 21, 24, 33, 48, 63, 69, 78, and 84. Positions 26 to 39 (PQGFQGPPGSSGPM) are enriched in low complexity. A compositionally biased stretch (basic and acidic residues) spans 51–65 (NGDDGEAGKPGRPGE). Lys87 bears the 5-hydroxylysine; alternate mark. Lys87 is a glycosylation site (O-linked (Gal...) hydroxylysine; alternate). The residue at position 93 (Ser93) is a Phosphoserine. Residues 101 to 115 (DAGPAGPKQMGPRGL) show a composition bias toward low complexity. 4-hydroxyproline is present on residues Pro116, Pro122, Pro143, Pro152, Pro155, Pro182, Pro185, Pro197, Pro203, Pro212, Pro218, Pro221, and Pro236. Residues 122–140 (PGASGPAGARGNDGATGAA) show a composition bias toward low complexity. Residues 142–154 (PPGPTGPAGPPGF) are compositionally biased toward pro residues. Over residues 188–238 (AGAAGPAGNPGADGQPGAKGANGAPGIAGAPGFPGARGPSGPQGPSGAPGP) the composition is skewed to low complexity. Position 239 is a 5-hydroxylysine (Lys239). 4-hydroxyproline occurs at positions 245, 248, 260, 269, 284, 290, 299, and 305. Gly residues predominate over residues 294–303 (GERGGPGSRG). Lys314 carries the 5-hydroxylysine modification. A 4-hydroxyproline mark is found at Pro323, Pro332, Pro338, Pro344, Pro353, Pro356, Pro365, Pro374, Pro380, Pro392, Pro401, Pro410, Pro413, Pro431, Pro449, Pro455, Pro461, Pro467, Pro473, Pro479, Pro491, Pro500, Pro511, Pro523, Pro526, Pro532, Pro538, and Pro547. Low complexity predominate over residues 347–401 (KGLTGSPGSPGPDGKTGPPGPAGQDGRPGPAGPPGARGQAGVMGFPGPKGAAGEP). A compositionally biased stretch (low complexity) spans 443–470 (QGPAGSPGFQGLPGPAGPPGEAGKPGEQ). A compositionally biased stretch (low complexity) spans 513–535 (NDGAKGDAGAPGAPGSQGAPGLQ). Lys559 carries the post-translational modification 5-hydroxylysine. 2 positions are modified to 4-hydroxyproline: Pro565 and Pro580. A compositionally biased stretch (low complexity) spans 592-606 (TGPSGPAGPTGARGA). Ser595 is subject to Phosphoserine. Pro607, Pro613, Pro616, Pro625, Pro631, Pro649, Pro658, and Pro667 each carry 4-hydroxyproline. Low complexity predominate over residues 619–646 (AGFAGPPGADGQPGAKGEPGDAGAKGDA). The segment covering 648-660 (PPGPAGPTGPPGP) has biased composition (pro residues). Lys670 carries the 5-hydroxylysine modification. Residues 675–691 (SAGPPGATGFPGAAGRV) show a composition bias toward low complexity. 4-hydroxyproline occurs at positions 679 and 685. Pro693 carries the 3-hydroxyproline modification. 16 positions are modified to 4-hydroxyproline: Pro694, Pro703, Pro706, Pro727, Pro736, Pro744, Pro753, Pro771, Pro780, Pro783, Pro789, Pro804, Pro810, Pro816, Pro825, and Pro831. Residues 720 to 729 (ETGPAGRPGE) are compositionally biased toward low complexity. The segment covering 741-762 (KGSPGADGPAGAPGTPGPQGIA) has biased composition (low complexity). Pro residues predominate over residues 803 to 813 (PPGPMGPPGLA). The segment covering 815-830 (PPGEAGREGSPGAEGS) has biased composition (low complexity). Residue Lys840 is modified to 5-hydroxylysine. The span at 848 to 863 (PGPPGAPGAPGAPGPV) shows a compositional bias: pro residues. 4-hydroxyproline occurs at positions 851, 854, and 857. Over residues 884–898 (AGPAGARGPAGPQGP) the composition is skewed to low complexity. Over residues 899–913 (RGDKGETGEQGDRGI) the composition is skewed to basic and acidic residues. Lys902 bears the 5-hydroxylysine mark. Lys914 carries the post-translational modification 5-hydroxylysine; alternate. Lys914 carries an O-linked (Gal...) hydroxylysine; alternate glycan. Residues Pro929, Pro932, Pro950, and Pro965 each carry the 4-hydroxyproline modification. A compositionally biased stretch (low complexity) spans 932–965 (PGEQGPSGASGPAGPRGPPGSAGTPGKDGLNGLP). Pro970 bears the 3-hydroxyproline mark. The residue at position 971 (Pro971) is a 4-hydroxyproline. The span at 983–998 (VGPPGPPGPPGPPGPP) shows a compositional bias: pro residues. 3-hydroxyproline is present on Pro985. Pro986 is subject to 4-hydroxyproline. The residue at position 988 (Pro988) is a 3-hydroxyproline. Residue Pro989 is modified to 4-hydroxyproline. Pro991 is modified (3-hydroxyproline). 3 positions are modified to 4-hydroxyproline: Pro992, Pro995, and Pro998.

Belongs to the fibrillar collagen family. Trimers of one alpha 2(I) and two alpha 1(I) chains. In terms of processing, contains mostly 4-hydroxyproline. Proline residues at the third position of the tripeptide repeating unit (G-X-Y) are hydroxylated in some or all of the chains. Post-translationally, contains 3-hydroxyproline at a few sites. This modification occurs on the first proline residue in the sequence motif Gly-Pro-Hyp, where Hyp is 4-hydroxyproline. Lysine residues at the third position of the tripeptide repeating unit (G-X-Y) are 5-hydroxylated in some or all of the chains. In terms of processing, O-glycosylated on hydroxylated lysine residues. The O-linked glycan consists of a Glc-Gal disaccharide. Expressed in bones.

It is found in the secreted. The protein localises to the extracellular space. The protein resides in the extracellular matrix. Its function is as follows. Type I collagen is a member of group I collagen (fibrillar forming collagen). This is Collagen alpha-1(I) chain from Glyptodon sp. (strain SLP-2019) (Giant armadillo).